The primary structure comprises 209 residues: Outer-membrane lipoprotein LolB (209 aa).

An N-terminal signal peptide occupies residues 1–21 (MNNMKTFKFLTALFATAILTA). Cysteine 22 is lipidated: N-palmitoyl cysteine. Residue cysteine 22 is the site of S-diacylglycerol cysteine attachment.

Belongs to the LolB family. Monomer.

The protein localises to the cell outer membrane. In terms of biological role, plays a critical role in the incorporation of lipoproteins in the outer membrane after they are released by the LolA protein. This chain is Outer-membrane lipoprotein LolB, found in Haemophilus influenzae (strain 86-028NP).